Here is a 272-residue protein sequence, read N- to C-terminus: MESSSINRWFEYESGHAWCESAYKYQTLPYVAEFANTCTNLPIIVLPLVNIMLLRRYLHDVNGGLIFPQLLLTFNGLASTYYHATLNLFGQLVDELSLVWIITVFLVVYIPVMKWFPEKFSKRLTLVRWVVLIVTALVSGLCFLEPNLNAIALMLFSIPAAVVINYEGKQSGIPDIESFPSRILALWGVAFSFWFADRLLCDFWLYLGTPYLHALFHLLAGLAGYTIFIMFSMIDIESRTKTHKYTAAVRYFPGKNGSIFSFPYISLKERSQ.

2 helical membrane-spanning segments follow: residues 34–54 (FANTCTNLPIIVLPLVNIMLL) and 61–81 (VNGGLIFPQLLLTFNGLASTY). H83 contacts Zn(2+). 4 consecutive transmembrane segments (helical) span residues 96–116 (LSLVWIITVFLVVYIPVMKWF), 124–144 (LTLVRWVVLIVTALVSGLCFL), 148–168 (LNAIALMLFSIPAAVVINYEG), and 183–203 (ILALWGVAFSFWFADRLLCDF). Residues H213 and H217 each coordinate Zn(2+). The helical transmembrane segment at 214 to 234 (ALFHLLAGLAGYTIFIMFSMI) threads the bilayer. An N-linked (GlcNAc...) asparagine glycan is attached at N256.

The protein belongs to the alkaline ceramidase family. Zn(2+) is required as a cofactor.

The protein resides in the membrane. It catalyses the reaction an N-acyl-sphingoid base + H2O = a sphingoid base + a fatty acid. The enzyme catalyses an N-acylsphing-4-enine + H2O = sphing-4-enine + a fatty acid. It carries out the reaction an N-acyl-15-methylhexadecasphing-4-enine + H2O = 15-methylhexadecasphing-4-enine + a fatty acid. Its pathway is lipid metabolism; sphingolipid metabolism. Functionally, hydrolyzes the sphingolipid ceramide into sphingoid base and free fatty acid. C.elegans contain specific sphingoid bases, which are unique or different in structure compared to the sphingoid bases found in other animals. Two examples of these distinctive compounds are: 15-methylhexadecasphinganine and 15-methylhexadecasphing-4-enine. This is Alkaline ceramidase from Caenorhabditis elegans.